An 82-amino-acid polypeptide reads, in one-letter code: RNA-binding protein TTE2299 (82 aa).

It belongs to the eukaryotic ribosomal protein eL8 family.

This is RNA-binding protein TTE2299 from Caldanaerobacter subterraneus subsp. tengcongensis (strain DSM 15242 / JCM 11007 / NBRC 100824 / MB4) (Thermoanaerobacter tengcongensis).